Reading from the N-terminus, the 104-residue chain is Holotricin-3 (104 aa).

An N-terminal signal peptide occupies residues 1–20 (MNKLIILGLACIIAVASAMP). A disordered region spans residues 22-104 (GPGDGHGGGH…HHGGYQTHGY (83 aa)). The span at 23-97 (PGDGHGGGHG…PGGHGGGHHG (75 aa)) shows a compositional bias: gly residues. 18 repeat units span residues 27-30 (HGGG), 31-34 (HGGG), 35-38 (HGGG), 39-42 (HGNG), 43-46 (QGGG), 47-50 (HGHG), 51-54 (PGGG), 55-58 (FGGG), 59-62 (HGGG), 63-66 (HGGG), 67-70 (GRGG), 71-74 (GGSG), 75-78 (GGGS), 79-82 (PGHG), 83-86 (AGGG), 87-90 (YPGG), 91-94 (HGGG), and 96-98 (HGG). The tract at residues 27 to 98 (HGGGHGGGHG…GGHGGGHHGG (72 aa)) is 18 X 4 AA approximate tandem repeats of H-G-G-G.

It to T.molitor tenecin 3.

Its subcellular location is the secreted. In terms of biological role, has antifungal activity against C.albicans. The sequence is that of Holotricin-3 from Holotrichia diomphalia (Korean black chafer).